We begin with the raw amino-acid sequence, 185 residues long: MAEERFPGWHGTTILAVRRGGEVVVAGDGQVSLGQTVIKGTARKVRRLSPGGHEVVAGFAGSTADAFTLLERLEKKLEAAPGQLARACVELAKDWRMDKYLRNLEAMLIVTDGETLLVLTGAGDVLEPEHDVTAIGSGGNFALAAARGLMATELPAEEIARKAMAIAADICVYTNGNLTVERISK.

Thr12 is an active-site residue. Na(+) contacts are provided by Ala168, Cys171, and Thr174.

It belongs to the peptidase T1B family. HslV subfamily. A double ring-shaped homohexamer of HslV is capped on each side by a ring-shaped HslU homohexamer. The assembly of the HslU/HslV complex is dependent on binding of ATP.

It localises to the cytoplasm. It carries out the reaction ATP-dependent cleavage of peptide bonds with broad specificity.. Its activity is regulated as follows. Allosterically activated by HslU binding. In terms of biological role, protease subunit of a proteasome-like degradation complex believed to be a general protein degrading machinery. This chain is ATP-dependent protease subunit HslV, found in Cereibacter sphaeroides (strain KD131 / KCTC 12085) (Rhodobacter sphaeroides).